We begin with the raw amino-acid sequence, 141 residues long: MTIILGADAHGNDLKEAIKGFLQQEGFDVTDVTAIADDFVDNTLAVARALKADEESLGIMIDAYGAGPFMVATKIKGMVAAEVSDERSAYMTRGHNNARMITMGAEIVGQELAKNIAKGFVTGHYDGGRHQIRVDMLNKMA.

Belongs to the LacAB/RpiB family. As to quaternary structure, heteromultimeric protein consisting of LacA and LacB.

It carries out the reaction aldehydo-D-galactose 6-phosphate = keto-D-tagatose 6-phosphate. Its pathway is carbohydrate metabolism; D-galactose 6-phosphate degradation; D-tagatose 6-phosphate from D-galactose 6-phosphate: step 1/1. The sequence is that of Galactose-6-phosphate isomerase subunit LacA from Streptococcus equi subsp. equi (strain 4047).